We begin with the raw amino-acid sequence, 323 residues long: Digestive cysteine proteinase 2 (323 aa).

A signal peptide spans 1 to 16; it reads MKVAVLFLCGVALAAA. Positions 17-107 are cleaved as a propeptide — activation peptide; the sequence is SPSWEHFKGK…FYPKKETGPQ (91 aa). 3 disulfides stabilise this stretch: Cys-128–Cys-171, Cys-162–Cys-204, and Cys-263–Cys-312. Cys-131 is an active-site residue. Active-site residues include His-270 and Asn-290.

Belongs to the peptidase C1 family.

Its activity is regulated as follows. Inhibited by E-64, antipain, leupeptin, heavy metal ions, iodoacetic acid, dithionitrobenzene, p-hydroxymercuri-benzoate; activated by mercaptoethanol and dithiothreitol. This chain is Digestive cysteine proteinase 2 (LCP2), found in Homarus americanus (American lobster).